The primary structure comprises 55 residues: Hirustasin (55 aa).

5 cysteine pairs are disulfide-bonded: C6–C17, C11–C22, C24–C44, C29–C48, and C33–C50. Residues 24-50 (CNEVHCRIRCKYGLKKDENGCEYPCSC) enclose the Antistasin-like domain.

It belongs to the protease inhibitor I15 (antistasin) family.

Its subcellular location is the secreted. Functionally, acts as an inhibitor of tissue kallikrein, trypsin, chymotrypsin and neutrophil cathepsin G. The sequence is that of Hirustasin from Hirudo medicinalis (Medicinal leech).